Here is a 237-residue protein sequence, read N- to C-terminus: MRQSGTSQPLLINMYLPDPVGDGLFKEGKSPSWGPLSPAVQKGSGQIQLWQFLLELLADRANAGCIAWEGGHGEFKLTDPDEVARRWGERKSKPNMNYDKLSRALRYYYDKNIMSKVHGKRYAYRFDFQGLAQACQPPPAHAHAAAAAAAAAAAAQDGALYKLPAGLAPLPFPGLSKLNLMAASAGVAPAGFSYWPGPNATAAAAATAALYPTPGLQPPPGPFGAVAAASHLGGHYH.

Positions 47–127 (IQLWQFLLEL…HGKRYAYRFD (81 aa)) form a DNA-binding region, ETS. The interval 129-237 (QGLAQACQPP…AASHLGGHYH (109 aa)) is may mediate active transcriptional repression.

It belongs to the ETS family. Expressed in central serotonergic neurons.

The protein localises to the nucleus. In terms of biological role, functions as a transcriptional regulator. May function as a transcriptional repressor. Functions in the differentiation and the maintenance of the central serotonergic neurons. May play a role in cell growth. The chain is Protein FEV (Fev) from Mus musculus (Mouse).